The sequence spans 284 residues: 2-dehydro-3-deoxyphosphooctonate aldolase (284 aa).

The protein belongs to the KdsA family.

The protein resides in the cytoplasm. It catalyses the reaction D-arabinose 5-phosphate + phosphoenolpyruvate + H2O = 3-deoxy-alpha-D-manno-2-octulosonate-8-phosphate + phosphate. It functions in the pathway carbohydrate biosynthesis; 3-deoxy-D-manno-octulosonate biosynthesis; 3-deoxy-D-manno-octulosonate from D-ribulose 5-phosphate: step 2/3. The protein operates within bacterial outer membrane biogenesis; lipopolysaccharide biosynthesis. The chain is 2-dehydro-3-deoxyphosphooctonate aldolase from Haemophilus influenzae (strain 86-028NP).